We begin with the raw amino-acid sequence, 127 residues long: Holo-[acyl-carrier-protein] synthase (127 aa).

Mg(2+) contacts are provided by Asp9 and Glu58.

This sequence belongs to the P-Pant transferase superfamily. AcpS family. Mg(2+) serves as cofactor.

It localises to the cytoplasm. The catalysed reaction is apo-[ACP] + CoA = holo-[ACP] + adenosine 3',5'-bisphosphate + H(+). Functionally, transfers the 4'-phosphopantetheine moiety from coenzyme A to a Ser of acyl-carrier-protein. The polypeptide is Holo-[acyl-carrier-protein] synthase (Shewanella baltica (strain OS185)).